The following is a 782-amino-acid chain: E3 UFM1-protein ligase 1 homolog (782 aa).

The tract at residues 405–478 (VSTQELEDDG…TRGGGGASKK (74 aa)) is disordered.

This sequence belongs to the UFL1 family.

Functionally, E3 UFM1-protein ligase that mediates ufmylation of target proteins. This Drosophila sechellia (Fruit fly) protein is E3 UFM1-protein ligase 1 homolog.